The following is a 423-amino-acid chain: Probable multifunctional protein ADE2 (423 aa).

The segment at 1-263 (MSSLAEIASR…KVMDITATFS (263 aa)) is SAICAR synthetase. Residues 264-423 (KHQQKCHVLV…NIYNANRKLE (160 aa)) form an AIR carboxylase region.

The protein in the N-terminal section; belongs to the SAICAR synthetase family. It in the C-terminal section; belongs to the AIR carboxylase family. Class II subfamily.

The enzyme catalyses 5-amino-1-(5-phospho-D-ribosyl)imidazole-4-carboxylate + L-aspartate + ATP = (2S)-2-[5-amino-1-(5-phospho-beta-D-ribosyl)imidazole-4-carboxamido]succinate + ADP + phosphate + 2 H(+). It carries out the reaction 5-amino-1-(5-phospho-D-ribosyl)imidazole-4-carboxylate + H(+) = 5-amino-1-(5-phospho-beta-D-ribosyl)imidazole + CO2. The protein operates within purine metabolism; IMP biosynthesis via de novo pathway; 5-amino-1-(5-phospho-D-ribosyl)imidazole-4-carboxamide from 5-amino-1-(5-phospho-D-ribosyl)imidazole-4-carboxylate: step 1/2. It participates in purine metabolism; IMP biosynthesis via de novo pathway; 5-amino-1-(5-phospho-D-ribosyl)imidazole-4-carboxylate from 5-amino-1-(5-phospho-D-ribosyl)imidazole (carboxylase route): step 1/1. The polypeptide is Probable multifunctional protein ADE2 (Caenorhabditis elegans).